Here is a 456-residue protein sequence, read N- to C-terminus: Antigen Lp49 (456 aa).

The first 34 residues, 1–34, serve as a signal peptide directing secretion; it reads MNSNPKKKFLKLIKIKSDIILLIPIFLFLVCCKS. A disulfide bridge connects residues cysteine 346 and cysteine 347.

Its subcellular location is the cell outer membrane. Functionally, may be involved in virulence. Binds human plasminogen (PLG) and stimulates its proteolytic cleavage to enzymatically active plasmin in the presence of an urokinase-type PLG activator in vitro. Activated plasmin has proteolytic activity which may help the bacteria to spread throughout the host by degrading extracellular matrix components, facilitating tissue penetration and invasion. This is Antigen Lp49 from Leptospira interrogans serogroup Icterohaemorrhagiae serovar copenhageni (strain Fiocruz L1-130).